Here is a 258-residue protein sequence, read N- to C-terminus: Phosphate import ATP-binding protein PstB 1 (258 aa).

Residues 5–247 (LDLTDVNIYY…EKIFSNPNQK (243 aa)) enclose the ABC transporter domain. 37 to 44 (GPSGCGKT) contributes to the ATP binding site.

The protein belongs to the ABC transporter superfamily. Phosphate importer (TC 3.A.1.7) family. As to quaternary structure, the complex is composed of two ATP-binding proteins (PstB), two transmembrane proteins (PstC and PstA) and a solute-binding protein (PstS).

Its subcellular location is the cell membrane. It catalyses the reaction phosphate(out) + ATP + H2O = ADP + 2 phosphate(in) + H(+). In terms of biological role, part of the ABC transporter complex PstSACB involved in phosphate import. Responsible for energy coupling to the transport system. The chain is Phosphate import ATP-binding protein PstB 1 from Mycobacterium tuberculosis (strain CDC 1551 / Oshkosh).